A 216-amino-acid chain; its full sequence is ATP-dependent Clp protease proteolytic subunit (216 aa).

S101 (nucleophile) is an active-site residue. The active site involves H126.

Belongs to the peptidase S14 family. In terms of assembly, component of the chloroplastic Clp protease core complex.

It is found in the plastid. Its subcellular location is the chloroplast stroma. It catalyses the reaction Hydrolysis of proteins to small peptides in the presence of ATP and magnesium. alpha-casein is the usual test substrate. In the absence of ATP, only oligopeptides shorter than five residues are hydrolyzed (such as succinyl-Leu-Tyr-|-NHMec, and Leu-Tyr-Leu-|-Tyr-Trp, in which cleavage of the -Tyr-|-Leu- and -Tyr-|-Trp bonds also occurs).. Cleaves peptides in various proteins in a process that requires ATP hydrolysis. Has a chymotrypsin-like activity. Plays a major role in the degradation of misfolded proteins. The sequence is that of ATP-dependent Clp protease proteolytic subunit from Saccharum hybrid (Sugarcane).